The sequence spans 448 residues: MQLREDLTPKQIVEELDKYIVGQKEAKKAVAIALRNRWRRHKLPEDLRDEVIPKNILMIGPTGVGKTEIARRLASLVGAPFIKVEATKFTEVGYVGRDVESIIRELAEASFKMVKAEKMEKVREKAKEIAEEKILDYLVPMRVKRYGTLETFEEETSPAREKFRQMLRNGELDERTVEIDVEEKGVSVVGGVIAPGLEDIENQLKDLFSSLAPTKRKRRKMTVREAMRVLEQQEAEKLIDMDEVASEAVYRAENFGIVFIDEIDKVAGKSTGSSPDVSREGVQRDLLPIVEGTTVSTKYGPVKTDHILFIAAGAFHLSKPSDLIPELQGRFPIRVELQPLTKDDFVKILTQPKNALIKQYKALMATEGVDIEFTDDAIEAIAEIAEQVNEKTENIGARRLHTILERIMEDYSFEAPDLKGQHIIIDEKVIRSKLGDIIQSEDLTRYIL.

ATP contacts are provided by residues Val-21, 63 to 68, Asp-261, Glu-326, and Arg-398; that span reads GVGKTE.

It belongs to the ClpX chaperone family. HslU subfamily. A double ring-shaped homohexamer of HslV is capped on each side by a ring-shaped HslU homohexamer. The assembly of the HslU/HslV complex is dependent on binding of ATP.

Its subcellular location is the cytoplasm. Functionally, ATPase subunit of a proteasome-like degradation complex; this subunit has chaperone activity. The binding of ATP and its subsequent hydrolysis by HslU are essential for unfolding of protein substrates subsequently hydrolyzed by HslV. HslU recognizes the N-terminal part of its protein substrates and unfolds these before they are guided to HslV for hydrolysis. The polypeptide is ATP-dependent protease ATPase subunit HslU (Persephonella marina (strain DSM 14350 / EX-H1)).